The primary structure comprises 1969 residues: Cytadherence high molecular weight protein 1 (1969 aa).

The HAT 1 repeat unit spans residues 148 to 166; it reads YYDENEEWVWTGYFDEDNK. The tract at residues 174 to 244 is disordered; that stretch reads KPAEVEALEE…QPESEQEGSG (71 aa). Composition is skewed to acidic residues over residues 179-207 and 214-242; these read EALE…EVVE and QPEE…EQEG. 3 HAT repeats span residues 258–278, 300–331, and 333–353; these read YYDE…NNFV and AQQE…VEGY. The disordered stretch occupies residues 294 to 319; the sequence is QVEEYSAQQEQVQEEYEQQPEQEGSG. A disordered region spans residues 365-393; the sequence is VSEEQYSESVSEEQEPASEEQVAEEPAQV. Residues 374–387 show a composition bias toward acidic residues; it reads VSEEQEPASEEQVA. 2 HAT repeats span residues 477-497 and 959-997; these read YYDE…GMFI and LTLV…DQNN. Residues 1000 to 1027 are a coiled coil; that stretch reads SDKDSKTQKVDQLIEEFNKQEAIKKTEE. The HAT 7 repeat unit spans residues 1029–1067; sequence EAKKASEPFYNKYIGNKQFGYYNDKNVWIWNGYFDENDQ. Coiled-coil stretches lie at residues 1082-1190, 1547-1621, and 1758-1790; these read IEDE…FDNF, SVNQ…LALT, and NRGD…NKKV.

Its subcellular location is the cell projection. The protein localises to the attachment organelle membrane. In terms of biological role, component of the cytoskeleton-like structure which stabilizes the shape of the wall-less Mycoplasma. This cytoskeleton-like network of accessory proteins containing HMW proteins 1 to 5 allows the proper anchoring of cytadhesin proteins in the mycoplasmal membrane at the attachment organelle. This chain is Cytadherence high molecular weight protein 1 (hlp1), found in Mycoplasmoides gallisepticum (strain R(low / passage 15 / clone 2)) (Mycoplasma gallisepticum).